The chain runs to 138 residues: Cysteine desulfuration protein SufE (138 aa).

Cys51 acts as the Cysteine persulfide intermediate in catalysis.

Belongs to the SufE family. In terms of assembly, homodimer. Interacts with SufS.

The protein localises to the cytoplasm. Its pathway is cofactor biosynthesis; iron-sulfur cluster biosynthesis. Functionally, participates in cysteine desulfuration mediated by SufS. Cysteine desulfuration mobilizes sulfur from L-cysteine to yield L-alanine and constitutes an essential step in sulfur metabolism for biosynthesis of a variety of sulfur-containing biomolecules. Functions as a sulfur acceptor for SufS, by mediating the direct transfer of the sulfur atom from the S-sulfanylcysteine of SufS, an intermediate product of cysteine desulfuration process. The sequence is that of Cysteine desulfuration protein SufE from Escherichia coli O6:K15:H31 (strain 536 / UPEC).